A 657-amino-acid polypeptide reads, in one-letter code: tRNA 5-methylaminomethyl-2-thiouridine biosynthesis bifunctional protein MnmC (657 aa).

Residues 1–233 (MPRALEPAEP…KWQMTVASFR (233 aa)) are tRNA (mnm(5)s(2)U34)-methyltransferase. The interval 257-657 (IGAGLAGCAV…LRALRHGHTG (401 aa)) is FAD-dependent cmnm(5)s(2)U34 oxidoreductase.

In the N-terminal section; belongs to the methyltransferase superfamily. tRNA (mnm(5)s(2)U34)-methyltransferase family. The protein in the C-terminal section; belongs to the DAO family. FAD serves as cofactor.

It is found in the cytoplasm. The enzyme catalyses 5-aminomethyl-2-thiouridine(34) in tRNA + S-adenosyl-L-methionine = 5-methylaminomethyl-2-thiouridine(34) in tRNA + S-adenosyl-L-homocysteine + H(+). Its function is as follows. Catalyzes the last two steps in the biosynthesis of 5-methylaminomethyl-2-thiouridine (mnm(5)s(2)U) at the wobble position (U34) in tRNA. Catalyzes the FAD-dependent demodification of cmnm(5)s(2)U34 to nm(5)s(2)U34, followed by the transfer of a methyl group from S-adenosyl-L-methionine to nm(5)s(2)U34, to form mnm(5)s(2)U34. The sequence is that of tRNA 5-methylaminomethyl-2-thiouridine biosynthesis bifunctional protein MnmC from Cupriavidus necator (strain ATCC 17699 / DSM 428 / KCTC 22496 / NCIMB 10442 / H16 / Stanier 337) (Ralstonia eutropha).